Reading from the N-terminus, the 128-residue chain is Large ribosomal subunit protein bL21 (128 aa).

The interval 104–128 (GKTPTVGPRPKKEKVVEPAEGEGDH) is disordered. The segment covering 116 to 128 (EKVVEPAEGEGDH) has biased composition (basic and acidic residues).

This sequence belongs to the bacterial ribosomal protein bL21 family. As to quaternary structure, part of the 50S ribosomal subunit. Contacts protein L20.

In terms of biological role, this protein binds to 23S rRNA in the presence of protein L20. The sequence is that of Large ribosomal subunit protein bL21 from Nitrobacter hamburgensis (strain DSM 10229 / NCIMB 13809 / X14).